Reading from the N-terminus, the 943-residue chain is Translation initiation factor IF-2 (943 aa).

The disordered stretch occupies residues 29–357 (LSVKSHSSSV…KPVTERKFHE (329 aa)). Basic and acidic residues-rich tracts occupy residues 69–82 (PKEE…DKAS), 112–137 (FKAE…DNRN), 145–155 (QGKRHNNDRRN), 163–196 (DHNK…RDNA), and 224–253 (RQSE…EKQQ). The span at 254–266 (AEVAVQKAAAETK) shows a compositional bias: low complexity. Basic and acidic residues predominate over residues 296-309 (KSRDNRRVNEDGPK). A compositionally biased stretch (low complexity) spans 313-332 (NNKWNNQNQVRNQRNSNWNK). One can recognise a tr-type G domain in the interval 445-614 (ERAPVVTIMG…LLVAEVEELK (170 aa)). Residues 454-461 (GHVDHGKT) form a G1 region. A GTP-binding site is contributed by 454 to 461 (GHVDHGKT). A G2 region spans residues 479 to 483 (GITQH). A G3 region spans residues 500–503 (DTPG). Residues 500–504 (DTPGH) and 554–557 (NKID) each bind GTP. A G4 region spans residues 554–557 (NKID). The G5 stretch occupies residues 590 to 592 (SAK).

The protein belongs to the TRAFAC class translation factor GTPase superfamily. Classic translation factor GTPase family. IF-2 subfamily.

It localises to the cytoplasm. Functionally, one of the essential components for the initiation of protein synthesis. Protects formylmethionyl-tRNA from spontaneous hydrolysis and promotes its binding to the 30S ribosomal subunits. Also involved in the hydrolysis of GTP during the formation of the 70S ribosomal complex. The protein is Translation initiation factor IF-2 of Streptococcus thermophilus (strain CNRZ 1066).